The following is a 2008-amino-acid chain: Histone-lysine N-methyltransferase SETD1B (2008 aa).

The span at methionine 1 to lysine 20 shows a compositional bias: basic and acidic residues. Positions methionine 1 to lysine 42 are disordered. Polar residues predominate over residues glutamine 22–serine 39. The RRM domain maps to aspartate 111 to lysine 199. 9 disordered regions span residues asparagine 249 to lysine 390, phenylalanine 402 to threonine 652, proline 682 to proline 725, arginine 950 to glutamate 1172, threonine 1309 to glutamate 1328, valine 1345 to threonine 1461, valine 1563 to glycine 1600, lysine 1674 to arginine 1712, and glutamate 1814 to glutamate 1842. Positions serine 251–proline 264 are enriched in low complexity. Polar residues-rich tracts occupy residues phenylalanine 265–proline 293, proline 301–proline 315, histidine 360–leucine 381, serine 405–serine 414, and aspartate 456–serine 491. The span at leucine 492–methionine 521 shows a compositional bias: basic and acidic residues. The span at serine 524–proline 537 shows a compositional bias: low complexity. Composition is skewed to polar residues over residues glycine 540–glycine 560 and alanine 582–arginine 604. Basic and acidic residues-rich tracts occupy residues serine 606–valine 617 and glutamate 626–glycine 636. Residues glutamate 637–methionine 646 show a composition bias toward acidic residues. Positions glutamate 979 to glutamate 997 are enriched in basic and acidic residues. Over residues leucine 1011 to glutamate 1020 the composition is skewed to acidic residues. Residues threonine 1021–glutamate 1031 are compositionally biased toward basic and acidic residues. Acidic residues-rich tracts occupy residues glutamate 1050–alanine 1094 and glutamate 1105–aspartate 1149. The span at arginine 1150 to glutamate 1172 shows a compositional bias: basic and acidic residues. Over residues valine 1345 to proline 1356 the composition is skewed to low complexity. Residues serine 1378 to leucine 1392 are compositionally biased toward basic and acidic residues. Low complexity predominate over residues leucine 1418–serine 1427. Composition is skewed to basic residues over residues leucine 1577–arginine 1587 and lysine 1681–lysine 1690. Residues isoleucine 1699–glutamine 1710 are compositionally biased toward pro residues. The short motif at arginine 1840–arginine 1845 is the RxxxRR motif element. The 118-residue stretch at lysine 1869–lysine 1986 folds into the SET domain. Tyrosine 1985 provides a ligand contact to S-adenosyl-L-methionine. In terms of domain architecture, Post-SET spans valine 1992–asparagine 2008.

Belongs to the class V-like SAM-binding methyltransferase superfamily. In terms of assembly, component of the SET1B/COMPASS complex.

It localises to the nucleus speckle. The protein resides in the chromosome. The enzyme catalyses L-lysyl(4)-[histone H3] + 3 S-adenosyl-L-methionine = N(6),N(6),N(6)-trimethyl-L-lysyl(4)-[histone H3] + 3 S-adenosyl-L-homocysteine + 3 H(+). Its function is as follows. Histone methyltransferase that specifically methylates 'Lys-4' of histone H3, when part of the SET1 histone methyltransferase (HMT) complex, but not if the neighboring 'Lys-9' residue is already methylated. H3 'Lys-4' methylation represents a specific tag for epigenetic transcriptional activation. The sequence is that of Histone-lysine N-methyltransferase SETD1B (SETD1B) from Gallus gallus (Chicken).